Reading from the N-terminus, the 334-residue chain is Phosphate acyltransferase (334 aa).

Belongs to the PlsX family. As to quaternary structure, homodimer. Probably interacts with PlsY.

It is found in the cytoplasm. It catalyses the reaction a fatty acyl-[ACP] + phosphate = an acyl phosphate + holo-[ACP]. It functions in the pathway lipid metabolism; phospholipid metabolism. Its function is as follows. Catalyzes the reversible formation of acyl-phosphate (acyl-PO(4)) from acyl-[acyl-carrier-protein] (acyl-ACP). This enzyme utilizes acyl-ACP as fatty acyl donor, but not acyl-CoA. The protein is Phosphate acyltransferase of Clostridium tetani (strain Massachusetts / E88).